Consider the following 201-residue polypeptide: Large ribosomal subunit protein uL4 (201 aa).

The segment at 45–67 (AQKTRAEVTGSGKKPWRQKGTGR) is disordered.

This sequence belongs to the universal ribosomal protein uL4 family. Part of the 50S ribosomal subunit.

In terms of biological role, one of the primary rRNA binding proteins, this protein initially binds near the 5'-end of the 23S rRNA. It is important during the early stages of 50S assembly. It makes multiple contacts with different domains of the 23S rRNA in the assembled 50S subunit and ribosome. Its function is as follows. Forms part of the polypeptide exit tunnel. The polypeptide is Large ribosomal subunit protein uL4 (Yersinia enterocolitica serotype O:8 / biotype 1B (strain NCTC 13174 / 8081)).